A 246-amino-acid chain; its full sequence is Orotidine 5'-phosphate decarboxylase (246 aa).

Substrate contacts are provided by residues aspartate 22, lysine 44, 71–80 (DLKFHDIPNT), threonine 131, arginine 192, glutamine 201, glycine 221, and arginine 222. Lysine 73 serves as the catalytic Proton donor.

It belongs to the OMP decarboxylase family. Type 1 subfamily. Homodimer.

It catalyses the reaction orotidine 5'-phosphate + H(+) = UMP + CO2. The protein operates within pyrimidine metabolism; UMP biosynthesis via de novo pathway; UMP from orotate: step 2/2. Functionally, catalyzes the decarboxylation of orotidine 5'-monophosphate (OMP) to uridine 5'-monophosphate (UMP). The protein is Orotidine 5'-phosphate decarboxylase of Yersinia enterocolitica serotype O:8 / biotype 1B (strain NCTC 13174 / 8081).